The sequence spans 95 residues: Cliotide T5 (95 aa).

A cross-link (cyclopeptide (Gly-Asn)) is located at residues 1–30 (GIPCGESCVFIPCISTVIGCSCKNKVCYRN). Disulfide bonds link cysteine 4–cysteine 20, cysteine 8–cysteine 22, and cysteine 13–cysteine 27. The propeptide at 31–95 (HVIAAEAKTM…KDHLKMSITN (65 aa)) is removed in mature form.

In terms of processing, contains 3 disulfide bonds. This is a cyclic peptide. As to expression, expressed in stem, shoot, root, leaf, pod and nodule but not in flower and seed (at protein level).

Probably participates in a plant defense mechanism. The polypeptide is Cliotide T5 (Clitoria ternatea (Butterfly pea)).